The sequence spans 198 residues: Transcription antitermination protein NusB (198 aa).

Belongs to the NusB family.

Functionally, involved in transcription antitermination. Required for transcription of ribosomal RNA (rRNA) genes. Binds specifically to the boxA antiterminator sequence of the ribosomal RNA (rrn) operons. The protein is Transcription antitermination protein NusB of Methylococcus capsulatus (strain ATCC 33009 / NCIMB 11132 / Bath).